The following is a 260-amino-acid chain: Zinc finger protein 575 (260 aa).

Positions 22-81 (PGLGPGRWLLPGAHQPSCPPAPHQGPLQKPSQSAPGPTASASAPPRPRRRPPPQRPHRCP) are disordered. Residues 51–64 (PSQSAPGPTASASA) show a composition bias toward low complexity. Positions 67 to 78 (RPRRRPPPQRPH) are enriched in basic residues. C2H2-type zinc fingers lie at residues 78-100 (HRCPDCDKAFSYPSKLATHRLAH), 106-128 (HPCPDCPKAFSYPSKLAAHRLTH), 134-156 (HPCPHCPKAFGHRSKLAAHLWTH), 162-184 (YPCPDCPKSFCYPSKLAAHRHTH), 192-214 (YPCPHCPKAFSFPSKLAAHRLCH), and 228-255 (HRCSSCGQAFGQRRLLLLHQRSHHQVEH).

The protein belongs to the krueppel C2H2-type zinc-finger protein family.

It is found in the nucleus. May be involved in transcriptional regulation. The sequence is that of Zinc finger protein 575 (ZNF575) from Macaca fascicularis (Crab-eating macaque).